The chain runs to 103 residues: Small ribosomal subunit protein uS10 (103 aa).

This sequence belongs to the universal ribosomal protein uS10 family. In terms of assembly, part of the 30S ribosomal subunit.

Its function is as follows. Involved in the binding of tRNA to the ribosomes. This chain is Small ribosomal subunit protein uS10, found in Stutzerimonas stutzeri (strain A1501) (Pseudomonas stutzeri).